The following is a 67-amino-acid chain: Large ribosomal subunit protein bL35 (67 aa).

The interval 21–50 is disordered; sequence KVMCGPGNKRHGLINRPQKMKRTNRGPQTM. Basic residues predominate over residues 28 to 44; it reads NKRHGLINRPQKMKRTN.

Belongs to the bacterial ribosomal protein bL35 family.

In Gluconobacter oxydans (strain 621H) (Gluconobacter suboxydans), this protein is Large ribosomal subunit protein bL35.